A 230-amino-acid chain; its full sequence is Flagellar L-ring protein (230 aa).

A signal peptide spans 1–18 (MNRLNIAVSCLATALLFG). Cysteine 19 is lipidated: N-palmitoyl cysteine. Residue cysteine 19 is the site of S-diacylglycerol cysteine attachment.

It belongs to the FlgH family. In terms of assembly, the basal body constitutes a major portion of the flagellar organelle and consists of four rings (L,P,S, and M) mounted on a central rod.

It is found in the cell outer membrane. Its subcellular location is the bacterial flagellum basal body. Assembles around the rod to form the L-ring and probably protects the motor/basal body from shearing forces during rotation. The sequence is that of Flagellar L-ring protein from Legionella pneumophila (strain Corby).